Consider the following 107-residue polypeptide: N(4)-acetylcytidine amidohydrolase (107 aa).

The region spanning 9-105 is the ASCH domain; sequence TFFEFLTPLI…KLFVIEYELI (97 aa). The active-site Proton acceptor is the Lys23. Thr26 serves as the catalytic Nucleophile. Glu76 acts as the Proton donor in catalysis.

Belongs to the N(4)-acetylcytidine amidohydrolase family.

It catalyses the reaction N(4)-acetylcytidine + H2O = cytidine + acetate + H(+). It carries out the reaction N(4)-acetyl-2'-deoxycytidine + H2O = 2'-deoxycytidine + acetate + H(+). The enzyme catalyses N(4)-acetylcytosine + H2O = cytosine + acetate + H(+). In terms of biological role, catalyzes the hydrolysis of N(4)-acetylcytidine (ac4C). This is N(4)-acetylcytidine amidohydrolase from Vibrio parahaemolyticus serotype O3:K6 (strain RIMD 2210633).